Consider the following 402-residue polypeptide: Peptidyl-prolyl cis-trans isomerase FKBP8 (402 aa).

Residues 28-39 are compositionally biased toward acidic residues; the sequence is DGVDDAEEEDDL. The disordered stretch occupies residues 28–54; it reads DGVDDAEEEDDLSGLPPLEDMGQPTVE. A PPIase FKBP-type domain is found at 110-194; it reads GQVVTVHLQM…CLEVTLKTAE (85 aa). The stretch at 211–244 is one TPR 1 repeat; the sequence is ANRKRECGNAHYQRADFVLAANSYDLAIKAITSN. Glycyl lysine isopeptide (Lys-Gly) (interchain with G-Cter in ubiquitin) cross-links involve residues Lys239, Lys261, Lys263, and Lys274. TPR repeat units lie at residues 262 to 295 and 296 to 329; these read VKCLNNLAASQLKLDHYRAALRSCSQVLEHQPDN and IKALFRKGKVLAQQGEYSEAIPILRAALKLEPSN. Ser286 bears the Phosphoserine mark. Glycyl lysine isopeptide (Lys-Gly) (interchain with G-Cter in ubiquitin) cross-links involve residues Lys297, Lys304, Lys324, Lys330, Lys338, Lys341, and Lys342. The chain crosses the membrane as a helical span at residues 380 to 400; that stretch reads WLFGATAVALGGVALSVVIAA.

Homomultimers or heteromultimers (Potential). Forms heterodimer with calmodulin. When activated by calmodulin and calcium, interacts with the BH4 domain of BCL2 and weakly with BCLX isoform Bcl-X(L). Does not bind and inhibit calcineurin. Interacts with ZFYVE27; may negatively regulate ZFYVE27 phosphorylation. The cofactor is Ca(2+). Ubiquitinated by PRKN during mitophagy, leading to its degradation and enhancement of mitophagy. Deubiquitinated by USP30. As to expression, detected throughout the embryonic body, in caudal neural tube, limbs and head. Detected in adult retina, brain, heart, kidney, liver, pancreas, lung, testis and urinary bladder (at protein level). Detected in adult brain, kidney, liver, testis and trigeminal nerve, and in embryo. Detected at lower levels in lung, spleen, heart and ovary. Widely expressed in forebrain. Detected in the Purkinje cell layer in the cerebellum and in hippocampus neurons.

It localises to the mitochondrion membrane. The catalysed reaction is [protein]-peptidylproline (omega=180) = [protein]-peptidylproline (omega=0). Constitutively inactive PPiase, which becomes active when bound to calmodulin and calcium. Seems to act as a chaperone for BCL2, targets it to the mitochondria and modulates its phosphorylation state. The BCL2/FKBP8/calmodulin/calcium complex probably interferes with the binding of BCL2 to its targets. The active form of FKBP8 may therefore play a role in the regulation of apoptosis. Required for normal embryonic development. The polypeptide is Peptidyl-prolyl cis-trans isomerase FKBP8 (Fkbp8) (Mus musculus (Mouse)).